Reading from the N-terminus, the 420-residue chain is Reticulon-4 receptor-like 2 (420 aa).

Residues 1–46 form the signal peptide; the sequence is MLPGLRRLLQAPASACLLLMLLALPLAAPSCPMLCTCYSSPPTVSC. 2 disulfide bridges follow: C31/C37 and C35/C46. The LRRNT domain maps to 47–60; it reads QANNFSSVPLSLPP. N-linked (GlcNAc...) asparagine glycosylation occurs at N50. 8 LRR repeats span residues 61–82, 83–104, 107–129, 132–153, 156–177, 180–201, 204–225, and 228–249; these read STQRLFLQNNLIRTLRPGTFGS, NLLTLWLFSNNLSTIYPGTFRH, ALEELDLGDNRHLRSLEPDTFQG, RLQSLHLYRCQLSSLPGNIFRG, SLQYLYLQENSLLHLQDDLFAD, NLSHLFLHGNRLRLLTEHVFRG, SLDRLLLHGNRLQGVHRAAFRG, and RLTILYLFNNSLASLPGEALAD. N93 carries an N-linked (GlcNAc...) asparagine glycan. N-linked (GlcNAc...) asparagine glycosylation occurs at N236. The LRRCT domain occupies 261-312; the sequence is NPWACDCRARPLWAWFQRARVSSSDVTCATPPERQGRDLRALREADFQACPP. 2 disulfide bridges follow: C265–C288 and C267–C310. The segment at 308–399 is disordered; it reads QACPPAAPTR…CQAPPDSRGP (92 aa). Positions 315–327 are important for interaction with MAG; sequence PTRPGSRARGNSS. Residues 351–360 are compositionally biased toward basic and acidic residues; it reads LPAEDSRGRQ. Residue C390 is the site of GPI-anchor amidated cysteine attachment. The propeptide at 391-420 is removed in mature form; it reads QAPPDSRGPALSAGLPSPLLCLLLLVPHHL.

The protein belongs to the Nogo receptor family. Interaction with MAG is controversial, and may be indirect. Does not interact with MAG, OMG and RTN4. Interacts with MAG. Post-translationally, undergoes zinc metalloproteinase-mediated ectodomain shedding in neuroblastoma cells; is released both as a full-length ectodomain and an N-terminal fragment containing the leucine-rich repeat (LRR) region of the protein. N-glycosylated. As to expression, highly expressed in brain and liver. Expressed at lower levels in kidney, mammary gland, placenta, skeletal muscle, spleen and thyroid.

Its subcellular location is the cell membrane. The protein localises to the membrane raft. It is found in the cell projection. The protein resides in the dendrite. It localises to the perikaryon. Its subcellular location is the axon. Cell surface receptor that plays a functionally redundant role in the inhibition of neurite outgrowth mediated by MAG. Plays a functionally redundant role in postnatal brain development. Contributes to normal axon migration across the brain midline and normal formation of the corpus callosum. Does not seem to play a significant role in regulating axon regeneration in the adult central nervous system. Protects motoneurons against apoptosis; protection against apoptosis is probably mediated by MAG. Like other family members, plays a role in restricting the number dendritic spines and the number of synapses that are formed during brain development. Signaling mediates activation of Rho and downstream reorganization of the actin cytoskeleton. The polypeptide is Reticulon-4 receptor-like 2 (Homo sapiens (Human)).